Here is a 179-residue protein sequence, read N- to C-terminus: Ribosome maturation factor RimM (179 aa).

The 79-residue stretch at 101-179 (EGEVYVHDLC…VELMHRWILE (79 aa)) folds into the PRC barrel domain.

This sequence belongs to the RimM family. Binds ribosomal protein uS19.

It is found in the cytoplasm. In terms of biological role, an accessory protein needed during the final step in the assembly of 30S ribosomal subunit, possibly for assembly of the head region. Essential for efficient processing of 16S rRNA. May be needed both before and after RbfA during the maturation of 16S rRNA. It has affinity for free ribosomal 30S subunits but not for 70S ribosomes. The sequence is that of Ribosome maturation factor RimM from Treponema denticola (strain ATCC 35405 / DSM 14222 / CIP 103919 / JCM 8153 / KCTC 15104).